Reading from the N-terminus, the 608-residue chain is Chaperone protein DnaK (608 aa).

Phosphothreonine; by autocatalysis is present on T175.

The protein belongs to the heat shock protein 70 family.

Functionally, acts as a chaperone. In Finegoldia magna (strain ATCC 29328 / DSM 20472 / WAL 2508) (Peptostreptococcus magnus), this protein is Chaperone protein DnaK.